The following is a 27-amino-acid chain: Secretin (27 aa).

The residue at position 27 (Val-27) is a Valine amide.

It belongs to the glucagon family.

The protein resides in the secreted. Functionally, hormone involved in different processes, such as regulation of the pH of the duodenal content, food intake and water homeostasis. Exerts its biological effects by binding to secretin receptor (SCTR), a G-protein coupled receptor expressed in the basolateral domain of several cells. Acts as a key gastrointestinal hormone by regulating the pH of the duodenal content. Secreted by S cells of the duodenum in the crypts of Lieberkuehn and regulates the pH of the duodenum by (1) inhibiting the secretion of gastric acid from the parietal cells of the stomach and (2) stimulating the production of bicarbonate (NaHCO(3)) from the ductal cells of the pancreas. Production of bicarbonate is essential to neutralize the pH and ensure no damage is done to the small intestine by the gastric acid. In addition to regulating the pH of the duodenal content, plays a central role in diet induced thermogenesis: acts as a non-sympathetic brown fat (BAT) activator mediating prandial thermogenesis, which consequentially induces satiation. Mechanistically, secretin released by the gut after a meal binds to secretin receptor (SCTR) in brown adipocytes, activating brown fat thermogenesis by stimulating lipolysis, which is sensed in the brain and promotes satiation. Also able to stimulate lipolysis in white adipocytes. Also plays an important role in cellular osmoregulation: released into the systemic circulation in response to hyperosmolality and acts at different levels in the hypothalamus, pituitary and kidney to regulate water homeostasis. Also plays a role in the central nervous system, possibly by acting as a neuropeptide hormone: required for hippocampal synaptic function and neural progenitor cells maintenance. The protein is Secretin of Canis lupus familiaris (Dog).